The following is a 651-amino-acid chain: DNA ligase (651 aa).

Residues 30–34 (DEEYD), 79–80 (SM), and Glu105 each bind NAD(+). Lys107 functions as the N6-AMP-lysine intermediate in the catalytic mechanism. Arg128, Glu162, and Lys301 together coordinate NAD(+). Positions 395, 398, 411, and 416 each coordinate Zn(2+). The BRCT domain occupies 570–651 (ALNENISNKT…NALLGGDDEV (82 aa)).

It belongs to the NAD-dependent DNA ligase family. LigA subfamily. Mg(2+) serves as cofactor. Requires Mn(2+) as cofactor.

It catalyses the reaction NAD(+) + (deoxyribonucleotide)n-3'-hydroxyl + 5'-phospho-(deoxyribonucleotide)m = (deoxyribonucleotide)n+m + AMP + beta-nicotinamide D-nucleotide.. Functionally, DNA ligase that catalyzes the formation of phosphodiester linkages between 5'-phosphoryl and 3'-hydroxyl groups in double-stranded DNA using NAD as a coenzyme and as the energy source for the reaction. It is essential for DNA replication and repair of damaged DNA. This is DNA ligase from Campylobacter lari (strain RM2100 / D67 / ATCC BAA-1060).